Consider the following 476-residue polypeptide: Immune evasion protein OPG047 (476 aa).

In terms of domain architecture, BTB spans 10–90; it reads CKNILALSMT…SYTGKVYIDS (81 aa). Residues 125–218 enclose the BACK domain; that stretch reads CVECYMMGIE…SNYLSPRGIN (94 aa). Kelch repeat units follow at residues 269–315, 316–359, 361–404, 406–443, and 444–476; these read VVYL…PANN, KLYV…SINN, IYVM…VFGR, LFLV…IVDN, and KLLL…WDGK.

Belongs to the orthopoxvirus OPG047 family.

Might have a role in the suppression of host immune response. The polypeptide is Immune evasion protein OPG047 (OPG047) (Vaccinia virus (strain Ankara) (VACV)).